Here is a 296-residue protein sequence, read N- to C-terminus: Phosphatidylglycerol--prolipoprotein diacylglyceryl transferase (296 aa).

3 consecutive transmembrane segments (helical) span residues 17-37, 59-79, and 97-117; these read LAVR…IVVG, MMFY…VLFY, and GGMS…LFAW. Arg142 contacts a 1,2-diacyl-sn-glycero-3-phospho-(1'-sn-glycerol). Transmembrane regions (helical) follow at residues 230-250 and 265-285; these read MGAI…TVEF and LSMG…MMIW.

The protein belongs to the Lgt family.

It localises to the cell inner membrane. It catalyses the reaction L-cysteinyl-[prolipoprotein] + a 1,2-diacyl-sn-glycero-3-phospho-(1'-sn-glycerol) = an S-1,2-diacyl-sn-glyceryl-L-cysteinyl-[prolipoprotein] + sn-glycerol 1-phosphate + H(+). It participates in protein modification; lipoprotein biosynthesis (diacylglyceryl transfer). In terms of biological role, catalyzes the transfer of the diacylglyceryl group from phosphatidylglycerol to the sulfhydryl group of the N-terminal cysteine of a prolipoprotein, the first step in the formation of mature lipoproteins. The protein is Phosphatidylglycerol--prolipoprotein diacylglyceryl transferase of Burkholderia thailandensis (strain ATCC 700388 / DSM 13276 / CCUG 48851 / CIP 106301 / E264).